The primary structure comprises 201 residues: UPF0098 protein MT1961 (201 aa).

Positions 125 to 146 are disordered; sequence TADGETPGGGISLPNSSGQPAY.

Belongs to the UPF0098 family.

This is UPF0098 protein MT1961 from Mycobacterium tuberculosis (strain CDC 1551 / Oshkosh).